We begin with the raw amino-acid sequence, 383 residues long: Protein delta homolog 1 (383 aa).

A signal peptide spans 1–23 (MIATGALLRVLLLLLAFGHSTYG). EGF-like domains lie at 24-55 (AECD…PLCE), 59-86 (TSPG…KFCE), 88-125 (DIRA…KDCQ), 127-168 (KAGP…NFCE), 170-206 (VTNS…KTCS), and 208-245 (PVSN…PTCA). The Extracellular portion of the chain corresponds to 24–306 (AECDPACDPQ…PLLTEGQAIC (283 aa)). 17 disulfides stabilise this stretch: Cys-26-Cys-37, Cys-30-Cys-43, Cys-45-Cys-54, Cys-63-Cys-68, Cys-76-Cys-85, Cys-92-Cys-103, Cys-97-Cys-113, Cys-115-Cys-124, Cys-131-Cys-144, Cys-138-Cys-156, Cys-158-Cys-167, Cys-174-Cys-185, Cys-179-Cys-194, Cys-196-Cys-205, Cys-212-Cys-223, Cys-217-Cys-233, and Cys-235-Cys-244. A helical membrane pass occupies residues 307 to 327 (FTILGVLTSLVVLGTVAIVFL). Over 328 to 383 (NKCEAWVSNLRYNHMLRKKKNLLLQYNSGEELAVNIIFPEKIDMTTFNKEAGDEDI) the chain is Cytoplasmic.

Monomer. Interacts with SH3RF2. Glycosylated. In terms of tissue distribution, pancreas and adrenal glands (at protein level).

The protein localises to the membrane. It localises to the cytoplasm. In terms of biological role, may have a role in neuroendocrine differentiation. Inhibits adipocyte differentiation. The protein is Protein delta homolog 1 (Dlk1) of Rattus norvegicus (Rat).